The following is a 524-amino-acid chain: Ribonuclease Y (524 aa).

A helical membrane pass occupies residues 7-27 (LGGLLTGIVIAIIASIIASVI). Residues 214–299 (TVSVVPLPND…EMVEKARKEV (86 aa)) form the KH domain. Residues 340 to 433 (VLSHSIEVAR…VQAADSISAA (94 aa)) enclose the HD domain.

The protein belongs to the RNase Y family.

It localises to the cell membrane. Endoribonuclease that initiates mRNA decay. This is Ribonuclease Y from Acetivibrio thermocellus (strain ATCC 27405 / DSM 1237 / JCM 9322 / NBRC 103400 / NCIMB 10682 / NRRL B-4536 / VPI 7372) (Clostridium thermocellum).